Consider the following 53-residue polypeptide: UPF0391 membrane protein BPSS2216 (53 aa).

Transmembrane regions (helical) follow at residues 5 to 25 (ALVFFIIAIIAAVLGFGGIAA) and 30 to 50 (IAKILFYIFVVIFLVTLVLGV).

The protein belongs to the UPF0391 family.

It is found in the cell membrane. In Burkholderia pseudomallei (strain K96243), this protein is UPF0391 membrane protein BPSS2216.